Consider the following 251-residue polypeptide: MQIHLLIVDALNLIRRIHAVQGSPCVKACQHALQQLIQHSQPSHAVAVFDEDDRSDSWRHQCLPDYKAGRSPMPDNLQQEMPLIRQAFNELGVACWHSPGNEADDLAATLVVKVAGAGHQVTIVSTDKGYCQLLAPNVQIRDYFQKRWLDMPFVKQEFGVLPRQLPDYWGLAGISSSKIPGVAGVGAKTATLLLQQADTLEVLYQNLESIPEKWRKKLQQHQQMAFTCKQIATLKTDLLLSGNLQQLRLKK.

Mg(2+) is bound at residue Asp104. Residues 160–250 (VLPRQLPDYW…SGNLQQLRLK (91 aa)) form the 5'-3' exonuclease domain. K(+) contacts are provided by Leu171, Ala172, Pro180, Val182, and Val185. Residues 184–189 (GVGAKT) are interaction with DNA.

This sequence belongs to the Xni family. Mg(2+) serves as cofactor. Requires K(+) as cofactor.

Functionally, has flap endonuclease activity. During DNA replication, flap endonucleases cleave the 5'-overhanging flap structure that is generated by displacement synthesis when DNA polymerase encounters the 5'-end of a downstream Okazaki fragment. The sequence is that of Flap endonuclease Xni from Yersinia pseudotuberculosis serotype I (strain IP32953).